Here is a 457-residue protein sequence, read N- to C-terminus: uncharacterized protein (457 aa).

The TRAM domain maps to 5-63 (PVEEGQKFPLTIRRMGINGEGIGYFKKAVVFVPGAITGEEVVVEAVKVRDRFTEAKLNK). Residues Cys76, Cys82, Cys85, and Cys166 each contribute to the [4Fe-4S] cluster site. Positions 290, 319, 340, and 388 each coordinate S-adenosyl-L-methionine. Cys415 acts as the Nucleophile in catalysis.

The protein belongs to the class I-like SAM-binding methyltransferase superfamily. RNA M5U methyltransferase family.

This is an uncharacterized protein from Listeria innocua serovar 6a (strain ATCC BAA-680 / CLIP 11262).